Consider the following 829-residue polypeptide: Disintegrin and metalloproteinase domain-containing protein 23 (829 aa).

The signal sequence occupies residues 1–55; it reads MKPPGSISRRPTLTGCSLPGASCGPGRCPAGPVPARAPPCRLLLVLLLLPALATS. The propeptide occupies 56–283; that stretch reads SRPRARGAAA…ELQWLRRRKR (228 aa). N-linked (GlcNAc...) asparagine glycans are attached at residues Asn-72, Asn-92, Asn-97, and Asn-260. Residues 284 to 789 lie on the Extracellular side of the membrane; the sequence is AVNPSRGVFE…EGPKGPSATN (506 aa). The region spanning 296-493 is the Peptidase M12B domain; sequence KYLELMIVND…GGGACLFNRP (198 aa). Cystine bridges form between Cys-405–Cys-488, Cys-447–Cys-472, and Cys-449–Cys-456. Residues 499-585 enclose the Disintegrin domain; that stretch reads PTECGNGYVE…QCPPNLHKQD (87 aa). 2 N-linked (GlcNAc...) asparagine glycosylation sites follow: Asn-544 and Asn-545. A disulfide bond links Cys-557 and Cys-577. 2 N-linked (GlcNAc...) asparagine glycosylation sites follow: Asn-661 and Asn-729. The EGF-like domain occupies 729 to 766; sequence NMSSCPLDSRGKVCSGHGVCSNEATCICDFTWAGTDCS. Disulfide bonds link Cys-733–Cys-748, Cys-742–Cys-754, and Cys-756–Cys-765. The chain crosses the membrane as a helical span at residues 790-810; the sequence is LIIGSIAGAILVAAIVLGGTG. At 811 to 829 the chain is on the cytoplasmic side; the sequence is WGFKNVKKRRFDPTQQGPI.

Can bind to LGI1 and LGI4. As to expression, brain specific.

It localises to the cell membrane. The protein resides in the secreted. May play a role in cell-cell and cell-matrix interactions. This is a non-catalytic metalloprotease-like protein. In Mus musculus (Mouse), this protein is Disintegrin and metalloproteinase domain-containing protein 23 (Adam23).